The sequence spans 62 residues: UPF0434 protein NGR_c31900 (62 aa).

The protein belongs to the UPF0434 family.

The polypeptide is UPF0434 protein NGR_c31900 (Sinorhizobium fredii (strain NBRC 101917 / NGR234)).